The following is a 419-amino-acid chain: Arginine biosynthesis bifunctional protein ArgJ 1, mitochondrial (419 aa).

Lysine 177, threonine 188, glutamate 275, asparagine 414, and threonine 419 together coordinate substrate. The active-site Nucleophile is threonine 188.

This sequence belongs to the ArgJ family. As to quaternary structure, heterodimer of an alpha and a beta chain. The alpha and beta chains are autoproteolytically processed from a single precursor protein within the mitochondrion.

It localises to the mitochondrion matrix. It catalyses the reaction N(2)-acetyl-L-ornithine + L-glutamate = N-acetyl-L-glutamate + L-ornithine. The catalysed reaction is L-glutamate + acetyl-CoA = N-acetyl-L-glutamate + CoA + H(+). Its pathway is amino-acid biosynthesis; L-arginine biosynthesis; L-ornithine and N-acetyl-L-glutamate from L-glutamate and N(2)-acetyl-L-ornithine (cyclic): step 1/1. It participates in amino-acid biosynthesis; L-arginine biosynthesis; N(2)-acetyl-L-ornithine from L-glutamate: step 1/4. Functionally, catalyzes two activities which are involved in the cyclic version of arginine biosynthesis: the synthesis of acetylglutamate from glutamate and acetyl-CoA, and of ornithine by transacetylation between acetylornithine and glutamate. The sequence is that of Arginine biosynthesis bifunctional protein ArgJ 1, mitochondrial from Sclerotinia sclerotiorum (strain ATCC 18683 / 1980 / Ss-1) (White mold).